The primary structure comprises 196 residues: Adenosylcobinamide-phosphate guanylyltransferase (196 aa).

Homodimer.

It carries out the reaction adenosylcob(III)inamide phosphate + GTP + H(+) = adenosylcob(III)inamide-GDP + diphosphate. It participates in cofactor biosynthesis; adenosylcobalamin biosynthesis. Functionally, guanylyltransferase that catalyzes the synthesis of adenosylcobinamide-GDP (AdoCbi-GDP) from adenosylcobinamide-phosphate (AdoCbi-P) and GTP. Is involved in adenosylcobalamin biosynthesis. Binds one GTP per dimer. Cannot use other NTPs or GDP. Does not display AdoCbi kinase activity. Is also able to catalyze the condensation of 2-phospho-L-lactate (LP) with GTP in vitro to form PPi and (2S)-lactyl-2-diphospho-5'-guanosine (LPPG), but is much less efficient than CofC, the presumed enzyme catalyzing this reaction in vivo. This is Adenosylcobinamide-phosphate guanylyltransferase (cobY) from Methanocaldococcus jannaschii (strain ATCC 43067 / DSM 2661 / JAL-1 / JCM 10045 / NBRC 100440) (Methanococcus jannaschii).